A 129-amino-acid chain; its full sequence is Small ribosomal subunit protein uS8 (129 aa).

The protein belongs to the universal ribosomal protein uS8 family. Part of the 30S ribosomal subunit. Contacts proteins S5 and S12.

Functionally, one of the primary rRNA binding proteins, it binds directly to 16S rRNA central domain where it helps coordinate assembly of the platform of the 30S subunit. The protein is Small ribosomal subunit protein uS8 of Mycoplasma mycoides subsp. mycoides SC (strain CCUG 32753 / NCTC 10114 / PG1).